The primary structure comprises 700 residues: Calpain-2 catalytic subunit (700 aa).

Ala2 is modified (N-acetylalanine). The propeptide at 2 to 19 is anchors to the small subunit; sequence AGIAAKLAKDREAAEGLG. One can recognise a Calpain catalytic domain in the interval 45–344; that stretch reads LFQDPSFPAL…YSRLEICNLT (300 aa). Residues Gly91 and Asp96 each coordinate Ca(2+). Cys105 is an active-site residue. Ca(2+) is bound by residues Glu175, Gln229, and Lys230. Residues His262 and Asn286 contribute to the active site. 3 residues coordinate Ca(2+): Glu292, Asp299, and Glu323. The tract at residues 345-514 is domain III; that stretch reads PDTLTSDSYK…KKADYQVVDD (170 aa). A linker region spans residues 515–529; it reads EIEANIDEIDISEDD. The tract at residues 530-700 is domain IV; the sequence is IDDGFRRLFA…LISWLSFSVL (171 aa). Ca(2+) contacts are provided by Ala542, Asp545, Glu547, Glu552, Asp585, Asp587, Ser589, Lys591, Glu596, Asp615, Asp617, Ser619, Thr621, Glu626, Asp658, and Asn661. 3 consecutive EF-hand domains span residues 572–597, 602–637, and 652–672; these read FSIE…LKEF, TKIQ…AGFK, and DDDL…LETL.

This sequence belongs to the peptidase C2 family. As to quaternary structure, forms a heterodimer with a small (regulatory) subunit (CAPNS1). Interacts with CPEB3; this leads to cleavage of CPEB3. Ca(2+) is required as a cofactor. In terms of tissue distribution, ubiquitous.

It localises to the cytoplasm. The protein resides in the cell membrane. It catalyses the reaction Broad endopeptidase specificity.. Activated by 200-1000 micromolar concentrations of calcium and inhibited by calpastatin. In terms of biological role, calcium-regulated non-lysosomal thiol-protease which catalyzes limited proteolysis of substrates involved in cytoskeletal remodeling and signal transduction. Proteolytically cleaves MYOC at 'Arg-226'. Proteolytically cleaves CPEB3 following neuronal stimulation which abolishes CPEB3 translational repressor activity, leading to translation of CPEB3 target mRNAs. This chain is Calpain-2 catalytic subunit (CAPN2), found in Bos taurus (Bovine).